Consider the following 258-residue polypeptide: Small ribosomal subunit protein uS2 (258 aa).

Residues 222–258 (GKALRDQDEAEQVEPVSQEEKDEVVAEAMSEADFEEQ) form a disordered region.

Belongs to the universal ribosomal protein uS2 family.

This is Small ribosomal subunit protein uS2 from Campylobacter fetus subsp. fetus (strain 82-40).